Consider the following 405-residue polypeptide: Tyrosine--tRNA ligase (405 aa).

Residue Tyr35 participates in L-tyrosine binding. The 'HIGH' region motif lies at Ala40–His49. Residues Tyr166 and Gln170 each coordinate L-tyrosine. Residues Lys226–Ser230 carry the 'KMSKS' region motif. Residue Lys229 participates in ATP binding. An S4 RNA-binding domain is found at Val340–Val404.

It belongs to the class-I aminoacyl-tRNA synthetase family. TyrS type 1 subfamily. Homodimer.

Its subcellular location is the cytoplasm. It carries out the reaction tRNA(Tyr) + L-tyrosine + ATP = L-tyrosyl-tRNA(Tyr) + AMP + diphosphate + H(+). Functionally, catalyzes the attachment of tyrosine to tRNA(Tyr) in a two-step reaction: tyrosine is first activated by ATP to form Tyr-AMP and then transferred to the acceptor end of tRNA(Tyr). The protein is Tyrosine--tRNA ligase of Borreliella afzelii (strain PKo) (Borrelia afzelii).